A 480-amino-acid polypeptide reads, in one-letter code: Protein nucleotidyltransferase YdiU (480 aa).

ATP is bound by residues glycine 86, glycine 88, arginine 89, lysine 109, aspartate 121, glycine 122, arginine 172, and arginine 179. Aspartate 248 (proton acceptor) is an active-site residue. Residues asparagine 249 and aspartate 258 each coordinate Mg(2+). ATP is bound at residue aspartate 258.

This sequence belongs to the SELO family. Requires Mg(2+) as cofactor. It depends on Mn(2+) as a cofactor.

It catalyses the reaction L-seryl-[protein] + ATP = 3-O-(5'-adenylyl)-L-seryl-[protein] + diphosphate. The enzyme catalyses L-threonyl-[protein] + ATP = 3-O-(5'-adenylyl)-L-threonyl-[protein] + diphosphate. It carries out the reaction L-tyrosyl-[protein] + ATP = O-(5'-adenylyl)-L-tyrosyl-[protein] + diphosphate. The catalysed reaction is L-histidyl-[protein] + UTP = N(tele)-(5'-uridylyl)-L-histidyl-[protein] + diphosphate. It catalyses the reaction L-seryl-[protein] + UTP = O-(5'-uridylyl)-L-seryl-[protein] + diphosphate. The enzyme catalyses L-tyrosyl-[protein] + UTP = O-(5'-uridylyl)-L-tyrosyl-[protein] + diphosphate. Nucleotidyltransferase involved in the post-translational modification of proteins. It can catalyze the addition of adenosine monophosphate (AMP) or uridine monophosphate (UMP) to a protein, resulting in modifications known as AMPylation and UMPylation. In Salmonella newport (strain SL254), this protein is Protein nucleotidyltransferase YdiU.